Consider the following 489-residue polypeptide: Bifunctional protein HldE (489 aa).

Residues 1 to 328 are ribokinase; sequence METENIHSFD…ELKAQLQDQP (328 aa). ATP is bound at residue 206–209; that stretch reads NKKE. Asp276 is a catalytic residue. Residues 357 to 489 form a cytidylyltransferase region; the sequence is LTNGCFDLLH…IIQDIRNGRG (133 aa).

In the N-terminal section; belongs to the carbohydrate kinase PfkB family. This sequence in the C-terminal section; belongs to the cytidylyltransferase family. Homodimer.

It catalyses the reaction D-glycero-beta-D-manno-heptose 7-phosphate + ATP = D-glycero-beta-D-manno-heptose 1,7-bisphosphate + ADP + H(+). It carries out the reaction D-glycero-beta-D-manno-heptose 1-phosphate + ATP + H(+) = ADP-D-glycero-beta-D-manno-heptose + diphosphate. It functions in the pathway nucleotide-sugar biosynthesis; ADP-L-glycero-beta-D-manno-heptose biosynthesis; ADP-L-glycero-beta-D-manno-heptose from D-glycero-beta-D-manno-heptose 7-phosphate: step 1/4. It participates in nucleotide-sugar biosynthesis; ADP-L-glycero-beta-D-manno-heptose biosynthesis; ADP-L-glycero-beta-D-manno-heptose from D-glycero-beta-D-manno-heptose 7-phosphate: step 3/4. Catalyzes the phosphorylation of D-glycero-D-manno-heptose 7-phosphate at the C-1 position to selectively form D-glycero-beta-D-manno-heptose-1,7-bisphosphate. In terms of biological role, catalyzes the ADP transfer from ATP to D-glycero-beta-D-manno-heptose 1-phosphate, yielding ADP-D-glycero-beta-D-manno-heptose. This Desulfatibacillum aliphaticivorans protein is Bifunctional protein HldE.